The sequence spans 1488 residues: Chromosome partition protein MukB (1488 aa).

34–41 serves as a coordination point for ATP; that stretch reads GGNGAGKS. Coiled coils occupy residues 326 to 418, 444 to 472, and 509 to 602; these read LEAD…QYNQ, LDTF…QTAH, and RHLA…QRAP. Positions 666–783 are flexible hinge; sequence PGGAEDQRLN…SLPIFGRAAR (118 aa). Coiled-coil stretches lie at residues 835-923, 977-1116, and 1209-1265; these read EAEI…AKLE, EMLS…AKAG, and VEAI…LQSV. The tract at residues 1049–1074 is disordered; that stretch reads ADSGAEERARQRRDELHAQLSNNRSR. The segment covering 1051–1065 has biased composition (basic and acidic residues); that stretch reads SGAEERARQRRDELH.

Belongs to the SMC family. MukB subfamily. In terms of assembly, homodimerization via its hinge domain. Binds to DNA via its C-terminal region. Interacts, and probably forms a ternary complex, with MukE and MukF via its C-terminal region. The complex formation is stimulated by calcium or magnesium. Interacts with tubulin-related protein FtsZ.

The protein localises to the cytoplasm. It localises to the nucleoid. Plays a central role in chromosome condensation, segregation and cell cycle progression. Functions as a homodimer, which is essential for chromosome partition. Involved in negative DNA supercoiling in vivo, and by this means organize and compact chromosomes. May achieve or facilitate chromosome segregation by condensation DNA from both sides of a centrally located replisome during cell division. The polypeptide is Chromosome partition protein MukB (Salmonella typhi).